Consider the following 270-residue polypeptide: tRNA pseudouridine synthase A (270 aa).

Asp60 serves as the catalytic Nucleophile. Residues 107–111 (FHARF) are RNA binding. A substrate-binding site is contributed by Tyr118. The interaction with tRNA stretch occupies residues 168–172 (QCQSR).

The protein belongs to the tRNA pseudouridine synthase TruA family. As to quaternary structure, homodimer.

It carries out the reaction uridine(38/39/40) in tRNA = pseudouridine(38/39/40) in tRNA. Its function is as follows. Formation of pseudouridine at positions 38, 39 and 40 in the anticodon stem and loop of transfer RNAs. The protein is tRNA pseudouridine synthase A of Escherichia fergusonii (strain ATCC 35469 / DSM 13698 / CCUG 18766 / IAM 14443 / JCM 21226 / LMG 7866 / NBRC 102419 / NCTC 12128 / CDC 0568-73).